Reading from the N-terminus, the 351-residue chain is AA9 family lytic polysaccharide monooxygenase A (351 aa).

The first 20 residues, 1 to 20 (MSNKAATLLAALSGAALVAA), serve as a signal peptide directing secretion. His-21 and His-107 together coordinate Cu(2+). A disulfide bridge connects residues Cys-76 and Cys-196. Residues His-182 and Gln-191 each coordinate O2. Tyr-193 provides a ligand contact to Cu(2+). Positions 315–351 (GVAPKWGQCGGNGWTGPTVCASGSTCTVLNPYYSQCI) constitute a CBM1 domain.

This sequence belongs to the polysaccharide monooxygenase AA9 family. It depends on Cu(2+) as a cofactor.

The protein resides in the secreted. The enzyme catalyses [(1-&gt;4)-beta-D-glucosyl]n+m + reduced acceptor + O2 = 4-dehydro-beta-D-glucosyl-[(1-&gt;4)-beta-D-glucosyl]n-1 + [(1-&gt;4)-beta-D-glucosyl]m + acceptor + H2O.. Its function is as follows. Lytic polysaccharide monooxygenase (LPMO) that depolymerizes crystalline and amorphous polysaccharides via the oxidation of scissile alpha- or beta-(1-4)-glycosidic bonds, yielding C1 and C4 oxidation products. Catalysis by LPMOs requires the reduction of the active-site copper from Cu(II) to Cu(I) by a reducing agent and H(2)O(2) or O(2) as a cosubstrate. The chain is AA9 family lytic polysaccharide monooxygenase A from Podospora anserina (strain S / ATCC MYA-4624 / DSM 980 / FGSC 10383) (Pleurage anserina).